We begin with the raw amino-acid sequence, 307 residues long: MTAGSPEECGEVRRSPEGRVSRLGRRLGRRRRPRSPPEPLRVRARLRLRSPSGAFAALGALVVLVGMGIAVAGYWPHRAGAPGSRAANASSPQMSELRREGRGGGRAHGPHERLRLLGPVIMGVGLFVFICANTLLYENRDLETRRLRQGVLRAQALRPPDGPGWDCALLPSPGPRSPRAVGCAEPEIWDPSPRRGTSPVPSVRSLRSEPANPRLGLPALLNSYPLKGPGLPPPWGPRTQTGHVIITVQPSGSCIEHSKSLDLGLGELLLGAPAARDCAHRSWPRLDRLSLGGYAKLGGGGDLGARV.

Residues 1–38 (MTAGSPEECGEVRRSPEGRVSRLGRRLGRRRRPRSPPE) are disordered. Residues 10–20 (GEVRRSPEGRV) show a composition bias toward basic and acidic residues. Residues 22–34 (RLGRRLGRRRRPR) show a composition bias toward basic residues. A helical membrane pass occupies residues 53–73 (GAFAALGALVVLVGMGIAVAG). The segment at 81–111 (APGSRAANASSPQMSELRREGRGGGRAHGPH) is disordered. N-linked (GlcNAc...) asparagine glycosylation is present at asparagine 88. The segment covering 96-111 (ELRREGRGGGRAHGPH) has biased composition (basic and acidic residues). A helical transmembrane segment spans residues 116–136 (LLGPVIMGVGLFVFICANTLL). Residues 180-211 (AVGCAEPEIWDPSPRRGTSPVPSVRSLRSEPA) form a disordered region.

The protein belongs to the TMEM200 family.

Its subcellular location is the membrane. This chain is Transmembrane protein 200B (TMEM200B), found in Homo sapiens (Human).